The sequence spans 1503 residues: Mitogen-activated protein kinase-binding protein 1 (1503 aa).

12 WD repeats span residues 89-130, 133-174, 176-214, 271-310, 337-376, 382-431, 472-511, 514-556, 560-601, 609-648, 654-693, and 696-735; these read SSRK…QVAE, EHKY…VVAS, KVSSRVTAVSFSEDCSYFVTAGNRHIKFWYLDDSKTSKV, VELRTTVAHCISVTQEYIFCGCADGTVRLFNPSNLHFLST, ARYPDTIALTFDPTNQWLSCVYNDHSIYVWDVRDPKKVGK, YHSS…VHGS, DPRVGIRSVCISPNGQHLASGDRMGTLRIHELQSLSEMLK, AHDS…SLQQ, EHSS…EGVQ, VRKTTLYDMDVEPSWKYTAIGCQDRNIRIFNISSGKQKKL, GEDGTLIKVQTDPSGIYIATSCSDKNLSIFDFSSGECVAT, and GHSEIVTGMKFSNDCKHLISVSGDSCIFVWRLSSEMTISM. Disordered regions lie at residues 745–817, 874–917, and 951–1176; these read RQRG…SSPA, LAPS…RLQT, and VYPE…SWAS. Positions 784–796 are enriched in acidic residues; that stretch reads KEGEDEGTEEEEL. Polar residues-rich tracts occupy residues 905 to 917 and 957 to 972; these read CVSQNERAPRLQT and DSPTMDTSAFQVQAPT. The span at 1028-1043 shows a compositional bias: acidic residues; the sequence is DLEEPAEGDEDEEEEG. Basic and acidic residues predominate over residues 1058-1068; the sequence is PDQEQFLKQHF. The segment covering 1089 to 1129 has biased composition (polar residues); it reads SQSISSRFLLQVQTSPLREPSLSSSGLALTSRPDQVSQVSG. A Phosphoserine modification is found at S1193. Disordered stretches follow at residues 1217-1238 and 1369-1391; these read QGSLGSLPQAGGCSSQPHSYQN and QGPESLQPLSPEKTRNPVESSRP.

As to quaternary structure, can form homodimers (via C-terminus). Interacts (via C-terminus) with WDR62 (via C-terminus). Interacts with MAPK9. Interacts (via N-terminus) with NOD2; the interaction is enhanced in presence of muramyl dipeptide (MDP). Interacts with MAPK10. In terms of tissue distribution, ubiquitously expressed. Highest expression observed in brain.

Its subcellular location is the cytoplasm. It localises to the nucleus. The protein localises to the cytoskeleton. The protein resides in the spindle pole. Functionally, negative regulator of NOD2 function. It down-regulates NOD2-induced processes such as activation of NF-kappa-B signaling, IL8 secretion and antibacterial response. Involved in JNK signaling pathway. In Mus musculus (Mouse), this protein is Mitogen-activated protein kinase-binding protein 1 (Mapkbp1).